The chain runs to 423 residues: Glycine amidinotransferase, mitochondrial (423 aa).

A mitochondrion-targeting transit peptide spans 1-43 (MLRVRCLRGGSRGAEALHYIGSRLGRTVTGWVQRTFQSTQAAT). Residues Ser46 and Ser49 each carry the phosphoserine modification. Arginine is bound at residue Asp170. Residues Asp254 and His303 contribute to the active site. Arginine-binding residues include Asp305, Arg322, Ser354, and Ser355. Residue Lys385 is modified to N6-acetyllysine. The Amidino-cysteine intermediate role is filled by Cys407.

It belongs to the amidinotransferase family. In terms of assembly, homodimer.

The protein localises to the mitochondrion inner membrane. The catalysed reaction is L-arginine + glycine = guanidinoacetate + L-ornithine. It carries out the reaction 4-aminobutanoate + L-arginine = 4-guanidinobutanoate + L-ornithine. It catalyses the reaction beta-alanine + L-arginine = 3-guanidinopropanoate + L-ornithine. The enzyme catalyses taurine + L-arginine = taurocyamine + L-ornithine. The protein operates within amine and polyamine biosynthesis; creatine biosynthesis; creatine from L-arginine and glycine: step 1/2. Functionally, transamidinase that catalyzes the transfer of the amidino group of L-arginine onto the amino moiety of acceptor metabolites such as glycine, beta-alanine, gamma-aminobutyric acid (GABA) and taurine yielding the corresponding guanidine derivatives. Catalyzes the rate-limiting step of creatine biosynthesis, namely the transfer of the amidino group from L-arginine to glycine to generate guanidinoacetate, which is then methylated by GAMT to form creatine. Provides creatine as a source for ATP generation in tissues with high energy demands, in particular skeletal muscle, heart and brain. The polypeptide is Glycine amidinotransferase, mitochondrial (GATM) (Bos taurus (Bovine)).